A 177-amino-acid chain; its full sequence is Isopentenyl-diphosphate Delta-isomerase (177 aa).

2 residues coordinate Mn(2+): His-22 and His-28. The 135-residue stretch at 26-160 (LRHKAISVFV…PERFTPWLRI (135 aa)) folds into the Nudix hydrolase domain. Cys-62 is a catalytic residue. His-64 serves as a coordination point for Mn(2+). Position 82 (Glu-82) interacts with Mg(2+). Mn(2+) is bound by residues Glu-108 and Glu-110. Glu-110 is an active-site residue.

The protein belongs to the IPP isomerase type 1 family. Requires Mg(2+) as cofactor. It depends on Mn(2+) as a cofactor.

It is found in the cytoplasm. The catalysed reaction is isopentenyl diphosphate = dimethylallyl diphosphate. It participates in isoprenoid biosynthesis; dimethylallyl diphosphate biosynthesis; dimethylallyl diphosphate from isopentenyl diphosphate: step 1/1. Its pathway is porphyrin-containing compound metabolism; chlorophyll biosynthesis. In terms of biological role, catalyzes the 1,3-allylic rearrangement of the homoallylic substrate isopentenyl (IPP) to its highly electrophilic allylic isomer, dimethylallyl diphosphate (DMAPP). The polypeptide is Isopentenyl-diphosphate Delta-isomerase (Cereibacter sphaeroides (strain ATCC 17025 / ATH 2.4.3) (Rhodobacter sphaeroides)).